Reading from the N-terminus, the 219-residue chain is Endonuclease III (219 aa).

Residues 109–128 enclose the HhH domain; sequence RDELVKLPGVGRKTANVVVS. Residues Cys-189, Cys-196, Cys-199, and Cys-205 each contribute to the [4Fe-4S] cluster site.

Belongs to the Nth/MutY family. [4Fe-4S] cluster serves as cofactor.

The enzyme catalyses 2'-deoxyribonucleotide-(2'-deoxyribose 5'-phosphate)-2'-deoxyribonucleotide-DNA = a 3'-end 2'-deoxyribonucleotide-(2,3-dehydro-2,3-deoxyribose 5'-phosphate)-DNA + a 5'-end 5'-phospho-2'-deoxyribonucleoside-DNA + H(+). DNA repair enzyme that has both DNA N-glycosylase activity and AP-lyase activity. The DNA N-glycosylase activity releases various damaged pyrimidines from DNA by cleaving the N-glycosidic bond, leaving an AP (apurinic/apyrimidinic) site. The AP-lyase activity cleaves the phosphodiester bond 3' to the AP site by a beta-elimination, leaving a 3'-terminal unsaturated sugar and a product with a terminal 5'-phosphate. This is Endonuclease III from Bacillus subtilis (strain 168).